The following is a 167-amino-acid chain: MELWSELQSYQNLRRLLELASARTSSCWRILFGSTLTNVIYRAKEEYSSRFADLLSHNPGIFASLNLGHHSFFQEIVIRNLDFSSPGRTVSGLAFICFILDQWSAQTHLSQGYTLDYMAMALWRTLLRRKRVLGCLPAQRPHGLDPVQEEEEEEENLRAGLDPSTEL.

Residues 143–167 (GLDPVQEEEEEEENLRAGLDPSTEL) are disordered.

This sequence belongs to the adenoviridae E1B 19 kDa protein family.

The protein localises to the host cell membrane. Its subcellular location is the host nucleus envelope. It localises to the host nucleus lamina. Putative adenovirus Bcl-2 homolog that inhibits apoptosis induced by TNF or FAS pathways, as well as p53-mediated apoptosis. Without E1B 19K function, virus production is compromised because of premature death of host cell. Interacts with Bax protein in cell lysates. This chain is E1B protein, small T-antigen, found in Human adenovirus F serotype 40 (HAdV-40).